We begin with the raw amino-acid sequence, 1021 residues long: Sodium/potassium-transporting ATPase subunit alpha-1 (1021 aa).

Positions 1 to 5 are excised as a propeptide; that stretch reads MGKGV. A compositionally biased stretch (basic and acidic residues) spans 1–11; sequence MGKGVGRDKYE. The interval 1-37 is disordered; sequence MGKGVGRDKYEPAAVSEHGDKKKAKKERDMDELKKEV. Residues 6 to 85 are Cytoplasmic-facing; sequence GRDKYEPAAV…NALTPPPTTP (80 aa). Position 9 is an N6-acetyllysine (K9). A Phosphotyrosine modification is found at Y10. At S16 the chain carries Phosphoserine; by PKC. K21 is modified (N6-acetyllysine). A compositionally biased stretch (basic and acidic residues) spans 26 to 37; it reads KERDMDELKKEV. Residues S38 and S45 each carry the phosphoserine modification. The interval 80 to 82 is phosphoinositide-3 kinase binding; that stretch reads PPP. A helical membrane pass occupies residues 86–106; it reads EWVKFCRQLFGGFSMLLWIGA. Residues 107-129 lie on the Extracellular side of the membrane; sequence ILCFLAYGIQAATEEEPQNDNLY. A helical transmembrane segment spans residues 130 to 150; it reads LGVVLSAVVIITGCFSYYQEA. The Cytoplasmic portion of the chain corresponds to 151-286; it reads KSSKIMESFK…GGQTPIAAEI (136 aa). The disordered stretch occupies residues 214-233; the sequence is SSLTGESEPQTRSPDFTNEN. S226 carries the post-translational modification Phosphoserine. Position 258 is a phosphotyrosine (Y258). A helical membrane pass occupies residues 287–306; it reads EHFIHIITGVAVFLGVSFFI. Topologically, residues 307–318 are extracellular; it reads LSLILEYTWLEA. The helical transmembrane segment at 319-336 threads the bilayer; sequence VIFLIGIIVANVPEGLLA. The Cytoplasmic portion of the chain corresponds to 337–770; that stretch reads TVTVCLTLTA…EEGRLIFDNL (434 aa). The active-site 4-aspartylphosphate intermediate is D374. Phosphoserine is present on residues S450 and S482. ATP is bound at residue K485. Y540 bears the Phosphotyrosine mark. The tract at residues 594-715 is mediates interaction with SCN7A; sequence RAAVPDAVGK…QGAIVAVTGD (122 aa). K659 is subject to N6-succinyllysine. Residues S666 and S673 each carry the phosphoserine modification. D715 and D719 together coordinate Mg(2+). The helical transmembrane segment at 771–790 threads the bilayer; it reads KKSIAYTLTSNIPEITPFLI. The Extracellular portion of the chain corresponds to 791–800; the sequence is FIIANIPLPL. Residues 801-821 traverse the membrane as a helical segment; it reads GTVTILCIDLGTDMVPAISLA. Over 822–841 the chain is Cytoplasmic; sequence YEQAESDIMKRQPRNPKTDK. Residues 842–864 traverse the membrane as a helical segment; sequence LVNEQLISMAYGQIGMIQALGGF. The Extracellular portion of the chain corresponds to 865–916; the sequence is FTYFVILAENGFLPIHLLGLRVNWDDRWINDVEDSYGQQWTYEQRKIVEFTC. Residues 917–936 form a helical membrane-spanning segment; the sequence is HTPFFVTIVVVQWADLVICK. The Cytoplasmic portion of the chain corresponds to 937–949; the sequence is TRRNSVFQQGMKN. S941 carries the phosphoserine; by PKA modification. A helical membrane pass occupies residues 950-968; it reads KILIFGLFEETALAAFLSY. At 969–983 the chain is on the extracellular side; sequence CPGMGVALRMYPLKP. A helical membrane pass occupies residues 984–1004; the sequence is TWWFCAFPYSLLIFVYDEVRK. Residues 1005–1021 are Cytoplasmic-facing; that stretch reads LIIRRRPGGWVEKETYY.

This sequence belongs to the cation transport ATPase (P-type) (TC 3.A.3) family. Type IIC subfamily. The sodium/potassium-transporting ATPase is composed of a catalytic alpha subunit, an auxiliary non-catalytic beta subunit and an additional regulatory subunit. Interacts with regulatory subunit FXYD1. Interacts with regulatory subunit FXYD3. Interacts with SIK1. Interacts with SLC35G1 and STIM1. Interacts with CLN3; this interaction regulates the sodium/potassium-transporting ATPase complex localization at the plasma membrane. Interacts with SCN7A; activates ATP1A1 P-type sodium:potassium-exchanging transporter activity which indirectly signals to nearby neurons to regulate sodium homeostasis. Post-translationally, phosphorylation on Tyr-10 modulates pumping activity. Phosphorylation of Ser-941 by PKA modulates the response of ATP1A1 to PKC. Dephosphorylation by protein phosphatase 2A (PP2A) following increases in intracellular sodium, leading to increase catalytic activity.

The protein resides in the cell membrane. It localises to the basolateral cell membrane. The protein localises to the sarcolemma. Its subcellular location is the cell projection. It is found in the axon. The protein resides in the melanosome. It carries out the reaction K(+)(out) + Na(+)(in) + ATP + H2O = K(+)(in) + Na(+)(out) + ADP + phosphate + H(+). In terms of biological role, this is the catalytic component of the active enzyme, which catalyzes the hydrolysis of ATP coupled with the exchange of sodium and potassium ions across the plasma membrane. This action creates the electrochemical gradient of sodium and potassium ions, providing the energy for active transport of various nutrients. Could also be part of an osmosensory signaling pathway that senses body-fluid sodium levels and controls salt intake behavior as well as voluntary water intake to regulate sodium homeostasis. In Sus scrofa (Pig), this protein is Sodium/potassium-transporting ATPase subunit alpha-1 (ATP1A1).